A 334-amino-acid polypeptide reads, in one-letter code: Phosphoribosylformylglycinamidine cyclo-ligase (334 aa).

It belongs to the AIR synthase family.

It localises to the cytoplasm. The enzyme catalyses 2-formamido-N(1)-(5-O-phospho-beta-D-ribosyl)acetamidine + ATP = 5-amino-1-(5-phospho-beta-D-ribosyl)imidazole + ADP + phosphate + H(+). The protein operates within purine metabolism; IMP biosynthesis via de novo pathway; 5-amino-1-(5-phospho-D-ribosyl)imidazole from N(2)-formyl-N(1)-(5-phospho-D-ribosyl)glycinamide: step 2/2. This chain is Phosphoribosylformylglycinamidine cyclo-ligase, found in Pyrococcus horikoshii (strain ATCC 700860 / DSM 12428 / JCM 9974 / NBRC 100139 / OT-3).